The sequence spans 250 residues: Flavin-dependent thymidylate synthase (250 aa).

The ThyX domain maps to 7-233 (LRVQLIAKTD…PAVFADFEVT (227 aa)). Residues Ser71, 95–97 (RHR), and Gln103 contribute to the FAD site. Residues 92 to 95 (ELIR), 103 to 107 (QLSQR), and Arg172 contribute to the dUMP site. Positions 95–105 (RHRHFSYSQLS) match the ThyX motif motif. Residues 188–190 (NYR) and His194 each bind FAD. Arg199 lines the dUMP pocket. The active-site Involved in ionization of N3 of dUMP, leading to its activation is the Arg199.

The protein belongs to the thymidylate synthase ThyX family. Homotetramer. It depends on FAD as a cofactor.

The catalysed reaction is dUMP + (6R)-5,10-methylene-5,6,7,8-tetrahydrofolate + NADPH + H(+) = dTMP + (6S)-5,6,7,8-tetrahydrofolate + NADP(+). It functions in the pathway pyrimidine metabolism; dTTP biosynthesis. Its function is as follows. Catalyzes the reductive methylation of 2'-deoxyuridine-5'-monophosphate (dUMP) to 2'-deoxythymidine-5'-monophosphate (dTMP) while utilizing 5,10-methylenetetrahydrofolate (mTHF) as the methyl donor, and NADPH and FADH(2) as the reductant. This Mycobacterium bovis (strain ATCC BAA-935 / AF2122/97) protein is Flavin-dependent thymidylate synthase.